The primary structure comprises 192 residues: A-type ATP synthase subunit E (192 aa).

The protein belongs to the V-ATPase E subunit family. Has multiple subunits with at least A(3), B(3), C, D, E, F, H, I and proteolipid K(x).

It is found in the cell membrane. Component of the A-type ATP synthase that produces ATP from ADP in the presence of a proton gradient across the membrane. The sequence is that of A-type ATP synthase subunit E from Sulfolobus acidocaldarius (strain ATCC 33909 / DSM 639 / JCM 8929 / NBRC 15157 / NCIMB 11770).